A 635-amino-acid polypeptide reads, in one-letter code: Chaperone protein HtpG (635 aa).

Positions 1 to 346 (MSQTTTNSAS…SADLPLNVSR (346 aa)) are a; substrate-binding. Residues 347–563 (EILQESRDVR…QNELSPHLLR (217 aa)) form a b region. Residues 564-635 (MLKAAGQEAP…KRLNGLLLKA (72 aa)) form a c region.

It belongs to the heat shock protein 90 family. Homodimer.

The protein resides in the cytoplasm. Its function is as follows. Molecular chaperone. Has ATPase activity. This Bordetella parapertussis (strain 12822 / ATCC BAA-587 / NCTC 13253) protein is Chaperone protein HtpG.